The chain runs to 616 residues: ATP-dependent zinc metalloprotease FtsH (616 aa).

The Cytoplasmic segment spans residues 1 to 8 (MRNLFKTA). Residues 9–29 (TIYILIALVILLLVDIFSGGL) traverse the membrane as a helical segment. The Extracellular segment spans residues 30 to 114 (SYNQFFSNLS…VTKEPPQVPW (85 aa)). A helical transmembrane segment spans residues 115–135 (WLSTFLPMLIFAGLMIFVWIF). Residues 136 to 616 (MLQQTQGGGS…VFEDAQPQLV (481 aa)) lie on the Cytoplasmic side of the membrane. Residue 208–215 (GPPGTGKT) participates in ATP binding. H430 contacts Zn(2+). Residue E431 is part of the active site. Residues H434 and D506 each contribute to the Zn(2+) site.

This sequence in the central section; belongs to the AAA ATPase family. It in the C-terminal section; belongs to the peptidase M41 family. In terms of assembly, homohexamer. Zn(2+) serves as cofactor.

The protein resides in the cell membrane. Acts as a processive, ATP-dependent zinc metallopeptidase for both cytoplasmic and membrane proteins. Plays a role in the quality control of integral membrane proteins. The polypeptide is ATP-dependent zinc metalloprotease FtsH (Caldicellulosiruptor bescii (strain ATCC BAA-1888 / DSM 6725 / KCTC 15123 / Z-1320) (Anaerocellum thermophilum)).